The chain runs to 571 residues: Oxysterol-binding protein 11 (571 aa).

Residues 1 to 73 (MSNFFKKLVK…IGEQIDTLDD (73 aa)) form a disordered region. A compositionally biased stretch (polar residues) spans 33-42 (NGNQVVPDTA). The span at 43-54 (SSYSDDSNSLSD) shows a compositional bias: low complexity. A coiled-coil region spans residues 387 to 420 (YLEREENKLANKEKNKIEEREREKRKTRESRKEI).

The protein belongs to the OSBP family.

The polypeptide is Oxysterol-binding protein 11 (osbK) (Dictyostelium discoideum (Social amoeba)).